We begin with the raw amino-acid sequence, 1199 residues long: DNA-directed RNA polymerase subunit beta' (1199 aa).

Residues Cys60, Cys62, Cys75, and Cys78 each contribute to the Zn(2+) site. Positions 449, 451, and 453 each coordinate Mg(2+). Residues Cys818, Cys892, Cys899, and Cys902 each contribute to the Zn(2+) site.

Belongs to the RNA polymerase beta' chain family. As to quaternary structure, the RNAP catalytic core consists of 2 alpha, 1 beta, 1 beta' and 1 omega subunit. When a sigma factor is associated with the core the holoenzyme is formed, which can initiate transcription. Mg(2+) is required as a cofactor. Requires Zn(2+) as cofactor.

It carries out the reaction RNA(n) + a ribonucleoside 5'-triphosphate = RNA(n+1) + diphosphate. In terms of biological role, DNA-dependent RNA polymerase catalyzes the transcription of DNA into RNA using the four ribonucleoside triphosphates as substrates. This is DNA-directed RNA polymerase subunit beta' from Bacillus licheniformis (strain ATCC 14580 / DSM 13 / JCM 2505 / CCUG 7422 / NBRC 12200 / NCIMB 9375 / NCTC 10341 / NRRL NRS-1264 / Gibson 46).